A 319-amino-acid polypeptide reads, in one-letter code: N-acyl-aromatic-L-amino acid amidohydrolase (carboxylate-forming) (319 aa).

The tract at residues 1-210 (MCSLPGSRKP…SILDFIELFN (210 aa)) is hydrolytic domain. Positions 21 and 24 each coordinate Zn(2+). Residues Arg-63 and 70–71 (NR) each bind substrate. A Zn(2+)-binding site is contributed by His-116. Substrate is bound by residues Glu-178 and Tyr-288. Residues 211 to 318 (QGMEFPAFEM…PGLTPSSTQT (108 aa)) are shielding domain. Position 318 is a phosphothreonine (Thr-318).

It belongs to the AspA/AstE family. Aspartoacylase subfamily. As to quaternary structure, exists as a mixture of homodimers and homotetramer, both catalytically active. Zn(2+) is required as a cofactor.

The protein resides in the apical cell membrane. The protein localises to the cytoplasm. The enzyme catalyses an N-acyl-aromatic L-alpha-amino acid + H2O = an aromatic L-alpha-amino acid + a carboxylate. The catalysed reaction is an N-acetyl-L-cysteine-S-conjugate + H2O = an S-substituted L-cysteine + acetate. Functionally, plays an important role in deacetylating mercapturic acids in kidney proximal tubules. Also acts on N-acetyl-aromatic amino acids. This is N-acyl-aromatic-L-amino acid amidohydrolase (carboxylate-forming) (Acy3) from Rattus norvegicus (Rat).